The chain runs to 345 residues: Protein RecA (345 aa).

65-72 (GPESSGKT) lines the ATP pocket.

This sequence belongs to the RecA family.

The protein resides in the cytoplasm. Functionally, can catalyze the hydrolysis of ATP in the presence of single-stranded DNA, the ATP-dependent uptake of single-stranded DNA by duplex DNA, and the ATP-dependent hybridization of homologous single-stranded DNAs. It interacts with LexA causing its activation and leading to its autocatalytic cleavage. In Colwellia psychrerythraea (strain 34H / ATCC BAA-681) (Vibrio psychroerythus), this protein is Protein RecA.